Consider the following 206-residue polypeptide: Small ribosomal subunit protein uS5 (206 aa).

Positions 1–23 are enriched in polar residues; that stretch reads MTDTPTKQENQSKTENPPSSNAN. The interval 1 to 52 is disordered; that stretch reads MTDTPTKQENQSKTENPPSSNANEQRRGNRNNDRKRNRRGDSKNERDSEWQE. Residues 24–52 show a composition bias toward basic and acidic residues; the sequence is EQRRGNRNNDRKRNRRGDSKNERDSEWQE. One can recognise an S5 DRBM domain in the interval 50–113; it reads WQERVVQIRR…SDGKKHLVRV (64 aa).

Belongs to the universal ribosomal protein uS5 family. As to quaternary structure, part of the 30S ribosomal subunit. Contacts proteins S4 and S8.

Functionally, with S4 and S12 plays an important role in translational accuracy. Its function is as follows. Located at the back of the 30S subunit body where it stabilizes the conformation of the head with respect to the body. This Prochlorococcus marinus subsp. pastoris (strain CCMP1986 / NIES-2087 / MED4) protein is Small ribosomal subunit protein uS5.